The following is a 201-amino-acid chain: Syndecan-2 (201 aa).

The first 18 residues, 1 to 18, serve as a signal peptide directing secretion; it reads MQRAWILLTLGLMACVSA. Over 19–144 the chain is Extracellular; it reads ETRAELTSDK…HSDNLFKRTE (126 aa). S41, S55, and S57 each carry an O-linked (Xyl...) (glycosaminoglycan) serine glycan. Disordered regions lie at residues 42–69 and 88–129; these read GLYPIDDDDYSSASGSGAYEDKGSPDLT and TMTL…KSTD. The span at 90-102 shows a compositional bias: polar residues; the sequence is TLKTQSITPTQTE. Positions 106-123 are enriched in basic and acidic residues; that stretch reads ETDKKEFEISEAEEKQDP. S115 is subject to Phosphoserine. A helical transmembrane segment spans residues 145–169; the sequence is VLAAVIAGGVIGFLFAIFLILLLVY. The Cytoplasmic segment spans residues 170–201; the sequence is RMRKKDEGSYDLGERKPSSAAYQKAPTKEFYA. The segment at 178–201 is disordered; that stretch reads SYDLGERKPSSAAYQKAPTKEFYA. Position 187 is a phosphoserine (S187).

It belongs to the syndecan proteoglycan family. In terms of assembly, interacts (via cytoplasmic domain) with SARM1. Forms a complex with SDCBP and PDCD6IP. Post-translationally, O-glycosylated; contains both heparan sulfate and chondroitin sulfate.

It localises to the membrane. Cell surface proteoglycan which regulates dendritic arbor morphogenesis. This chain is Syndecan-2 (Sdc2), found in Rattus norvegicus (Rat).